The chain runs to 670 residues: UvrABC system protein B (670 aa).

The Helicase ATP-binding domain maps to 26–183 (NGLKSGLAFQ…QRLVDLQYNR (158 aa)). 39 to 46 (GVTGSGKT) lines the ATP pocket. Positions 92-115 (YYDYYQPEAYVPSSDSFIEKDAAI) match the Beta-hairpin motif. A Helicase C-terminal domain is found at 431-597 (QVDDLLSEIN…GLSKQVNDVM (167 aa)). Residues 630–665 (LKQIALSEKQMFACAKNLEFEKAALFRDEVTKLHEQ) form the UVR domain.

The protein belongs to the UvrB family. As to quaternary structure, forms a heterotetramer with UvrA during the search for lesions. Interacts with UvrC in an incision complex.

The protein resides in the cytoplasm. Its function is as follows. The UvrABC repair system catalyzes the recognition and processing of DNA lesions. A damage recognition complex composed of 2 UvrA and 2 UvrB subunits scans DNA for abnormalities. Upon binding of the UvrA(2)B(2) complex to a putative damaged site, the DNA wraps around one UvrB monomer. DNA wrap is dependent on ATP binding by UvrB and probably causes local melting of the DNA helix, facilitating insertion of UvrB beta-hairpin between the DNA strands. Then UvrB probes one DNA strand for the presence of a lesion. If a lesion is found the UvrA subunits dissociate and the UvrB-DNA preincision complex is formed. This complex is subsequently bound by UvrC and the second UvrB is released. If no lesion is found, the DNA wraps around the other UvrB subunit that will check the other stand for damage. This Psychromonas ingrahamii (strain DSM 17664 / CCUG 51855 / 37) protein is UvrABC system protein B.